The sequence spans 112 residues: Protein new-glue 2 (112 aa).

Residues 1–24 form the signal peptide; it reads MKITVVLVLLATFLGCVMIHESEA. A compositionally biased stretch (low complexity) spans 24 to 69; that stretch reads ASTTTTSTSASATTTTSASATTTTSASATTTTSASATTTTASPSSS. A disordered region spans residues 24-112; sequence ASTTTTSTSA…RSSRNRRSEE (89 aa). 4 tandem repeats follow at residues 31–38, 39–46, 47–54, and 55–62. The segment at 31 to 62 is 4 X 8 AA tandem repeats of T-S-A-S-A-T-T-T; the sequence is TSASATTTTSASATTTTSASATTTTSASATTT. Over residues 70-112 the composition is skewed to basic residues; the sequence is SKKKTVTHYKRKVKRPKKVRKITRRRGLRSRNGRSSRNRRSEE.

It to NG-1, also to SGS-3. Salivary gland specific.

It localises to the secreted. This Drosophila melanogaster (Fruit fly) protein is Protein new-glue 2 (ng2).